Here is a 704-residue protein sequence, read N- to C-terminus: Ribosomal RNA large subunit methyltransferase K/L (704 aa).

Residues 43–154 (TMYQSLLWSR…KEKASLSLDL (112 aa)) enclose the THUMP domain.

This sequence belongs to the methyltransferase superfamily. RlmKL family.

The protein localises to the cytoplasm. It carries out the reaction guanosine(2445) in 23S rRNA + S-adenosyl-L-methionine = N(2)-methylguanosine(2445) in 23S rRNA + S-adenosyl-L-homocysteine + H(+). The catalysed reaction is guanosine(2069) in 23S rRNA + S-adenosyl-L-methionine = N(2)-methylguanosine(2069) in 23S rRNA + S-adenosyl-L-homocysteine + H(+). In terms of biological role, specifically methylates the guanine in position 2445 (m2G2445) and the guanine in position 2069 (m7G2069) of 23S rRNA. The chain is Ribosomal RNA large subunit methyltransferase K/L from Proteus mirabilis (strain HI4320).